Here is a 475-residue protein sequence, read N- to C-terminus: Sulfate adenylyltransferase subunit 1 (475 aa).

The region spanning 24–240 (KSLLRFLTCG…ESAEVERELE (217 aa)) is the tr-type G domain. The G1 stretch occupies residues 33–40 (GSVDDGKS). 33–40 (GSVDDGKS) serves as a coordination point for GTP. The interval 91–95 (GITID) is G2. A G3 region spans residues 112–115 (DTPG). GTP-binding positions include 112 to 116 (DTPGH) and 167 to 170 (NKMD). The tract at residues 167–170 (NKMD) is G4. The tract at residues 204 to 206 (SAL) is G5.

This sequence belongs to the TRAFAC class translation factor GTPase superfamily. Classic translation factor GTPase family. CysN/NodQ subfamily. As to quaternary structure, heterodimer composed of CysD, the smaller subunit, and CysN.

It carries out the reaction sulfate + ATP + H(+) = adenosine 5'-phosphosulfate + diphosphate. It participates in sulfur metabolism; hydrogen sulfide biosynthesis; sulfite from sulfate: step 1/3. Functionally, with CysD forms the ATP sulfurylase (ATPS) that catalyzes the adenylation of sulfate producing adenosine 5'-phosphosulfate (APS) and diphosphate, the first enzymatic step in sulfur assimilation pathway. APS synthesis involves the formation of a high-energy phosphoric-sulfuric acid anhydride bond driven by GTP hydrolysis by CysN coupled to ATP hydrolysis by CysD. This is Sulfate adenylyltransferase subunit 1 from Aeromonas hydrophila subsp. hydrophila (strain ATCC 7966 / DSM 30187 / BCRC 13018 / CCUG 14551 / JCM 1027 / KCTC 2358 / NCIMB 9240 / NCTC 8049).